Reading from the N-terminus, the 119-residue chain is V-type proton ATPase subunit F (119 aa).

It belongs to the V-ATPase F subunit family. V-ATPase is a heteromultimeric enzyme made up of two complexes: the ATP-hydrolytic V1 complex and the proton translocation V0 complex. The V1 complex consists of three catalytic AB heterodimers that form a heterohexamer, three peripheral stalks each consisting of EG heterodimers, one central rotor including subunits D and F, and the regulatory subunits C and H. The proton translocation complex V0 consists of the proton transport subunit a, a ring of proteolipid subunits c9c'', rotary subunit d, subunits e and f, and the accessory subunits ATP6AP1/Ac45 and ATP6AP2/PRR. As to expression, expressed in brain (at protein level).

It is found in the cytoplasmic vesicle. The protein localises to the secretory vesicle. Its subcellular location is the synaptic vesicle membrane. The protein resides in the clathrin-coated vesicle membrane. Subunit of the V1 complex of vacuolar(H+)-ATPase (V-ATPase), a multisubunit enzyme composed of a peripheral complex (V1) that hydrolyzes ATP and a membrane integral complex (V0) that translocates protons. V-ATPase is responsible for acidifying and maintaining the pH of intracellular compartments and in some cell types, is targeted to the plasma membrane, where it is responsible for acidifying the extracellular environment. This is V-type proton ATPase subunit F (ATP6V1F) from Bos taurus (Bovine).